A 498-amino-acid chain; its full sequence is Lysine--tRNA ligase (498 aa).

Mg(2+) contacts are provided by Glu-401 and Glu-408.

This sequence belongs to the class-II aminoacyl-tRNA synthetase family. Homodimer. Mg(2+) is required as a cofactor.

The protein localises to the cytoplasm. It carries out the reaction tRNA(Lys) + L-lysine + ATP = L-lysyl-tRNA(Lys) + AMP + diphosphate. The protein is Lysine--tRNA ligase of Dehalococcoides mccartyi (strain ATCC BAA-2266 / KCTC 15142 / 195) (Dehalococcoides ethenogenes (strain 195)).